A 148-amino-acid chain; its full sequence is Large-conductance mechanosensitive channel (148 aa).

The next 2 membrane-spanning stretches (helical) occupy residues 14–34 (VVDMAVGIIIGAAFTTIINTL) and 85–105 (GIFVNACISFLIVTFVMFLSV).

This sequence belongs to the MscL family. As to quaternary structure, homopentamer.

The protein localises to the cell inner membrane. Functionally, channel that opens in response to stretch forces in the membrane lipid bilayer. May participate in the regulation of osmotic pressure changes within the cell. The protein is Large-conductance mechanosensitive channel of Chlorobium phaeobacteroides (strain DSM 266 / SMG 266 / 2430).